We begin with the raw amino-acid sequence, 190 residues long: Large ribosomal subunit protein bL25 (190 aa).

The protein belongs to the bacterial ribosomal protein bL25 family. CTC subfamily. In terms of assembly, part of the 50S ribosomal subunit; part of the 5S rRNA/L5/L18/L25 subcomplex. Contacts the 5S rRNA. Binds to the 5S rRNA independently of L5 and L18.

In terms of biological role, this is one of the proteins that binds to the 5S RNA in the ribosome where it forms part of the central protuberance. This Neisseria meningitidis serogroup C (strain 053442) protein is Large ribosomal subunit protein bL25.